The chain runs to 265 residues: Aquaporin-5 (265 aa).

The Cytoplasmic segment spans residues 1 to 12; sequence MKKEVCSVAFLK. The helical transmembrane segment at 13 to 33 threads the bilayer; sequence AVFAEFLATLIFVFFGLGSAL. At 34 to 39 the chain is on the extracellular side; it reads KWPSAL. The helical transmembrane segment at 40 to 60 threads the bilayer; sequence PTILQIALAFGLAIGTLAQAL. Residues 61 to 65 are Cytoplasmic-facing; sequence GPVSG. The discontinuously helical intramembrane region spans 66–74; that stretch reads GHINPAITL. The short motif at 69-71 is the NPA 1 element; the sequence is NPA. At 75–87 the chain is on the cytoplasmic side; that stretch reads ALLVGNQISLLRA. Residues 88-108 form a helical membrane-spanning segment; the sequence is FFYVAAQLVGAIAGAGILYGV. Topologically, residues 109-126 are extracellular; it reads APLNARGNLAVNALNNNT. Asparagine 124 and asparagine 125 each carry an N-linked (GlcNAc...) asparagine glycan. A helical membrane pass occupies residues 127–147; that stretch reads TQGQAMVVELILTFQLALCIF. Residues 148 to 158 lie on the Cytoplasmic side of the membrane; that stretch reads ASTDSRRTSPV. A helical transmembrane segment spans residues 159-179; the sequence is GSPALSIGLSVTLGHLVGIYF. Threonine 180 is a topological domain (extracellular). Positions 181–191 form an intramembrane region, discontinuously helical; the sequence is GCSMNPARSFG. The NPA 2 signature appears at 185–187; the sequence is NPA. Topologically, residues 192–203 are extracellular; the sequence is PAVVMNRFSPAH. Residues 204-224 form a helical membrane-spanning segment; sequence WVFWVGPIVGAVLAAILYFYL. At 225–265 the chain is on the cytoplasmic side; sequence LFPNSLSLSERVAIIKGTYEPDEDWEEQREERKKTMELTTR.

It belongs to the MIP/aquaporin (TC 1.A.8) family. In terms of assembly, homotetramer; each monomer provides an independent water pore. Interacts with TRPV4; the interaction is probably indirect and regulates TRPV4 activation by hypotonicity. In terms of tissue distribution, detected in skin eccrine sweat glands, at the apical cell membrane and at intercellular canaliculi (at protein level).

The protein localises to the apical cell membrane. Its subcellular location is the cell membrane. It localises to the cytoplasmic vesicle membrane. The enzyme catalyses H2O(in) = H2O(out). Its function is as follows. Aquaporins form homotetrameric transmembrane channels, with each monomer independently mediating water transport across the plasma membrane along its osmotic gradient. Plays an important role in fluid secretion in salivary glands. Required for TRPV4 activation by hypotonicity. Together with TRPV4, controls regulatory volume decrease in salivary epithelial cells. Seems to play a redundant role in water transport in the eye, lung and in sweat glands. The protein is Aquaporin-5 of Homo sapiens (Human).